Here is a 306-residue protein sequence, read N- to C-terminus: tRNA-cytidine(32) 2-sulfurtransferase (306 aa).

The PP-loop motif signature appears at 49–54 (SGGKDS). Residues cysteine 124, cysteine 127, and cysteine 215 each contribute to the [4Fe-4S] cluster site.

The protein belongs to the TtcA family. As to quaternary structure, homodimer. Requires Mg(2+) as cofactor. [4Fe-4S] cluster is required as a cofactor.

The protein localises to the cytoplasm. It carries out the reaction cytidine(32) in tRNA + S-sulfanyl-L-cysteinyl-[cysteine desulfurase] + AH2 + ATP = 2-thiocytidine(32) in tRNA + L-cysteinyl-[cysteine desulfurase] + A + AMP + diphosphate + H(+). It functions in the pathway tRNA modification. In terms of biological role, catalyzes the ATP-dependent 2-thiolation of cytidine in position 32 of tRNA, to form 2-thiocytidine (s(2)C32). The sulfur atoms are provided by the cysteine/cysteine desulfurase (IscS) system. The polypeptide is tRNA-cytidine(32) 2-sulfurtransferase (Azoarcus sp. (strain BH72)).